Here is a 201-residue protein sequence, read N- to C-terminus: MICOS complex subunit MIC27 (201 aa).

A mitochondrion-targeting transit peptide spans 1–31 (MTQDKPIVETISNAGEQVTNVFGQFWQLVTS). Residues 32–117 (KNTTNNGDSK…KCNAYLTEEW (86 aa)) are Cytoplasmic-facing. The helical transmembrane segment at 118-138 (TALPKAAAITVGGMAGFVLGL) threads the bilayer. Over 139-145 (KRGPVGR) the chain is Mitochondrial intermembrane. A helical membrane pass occupies residues 146 to 166 (LLTTTIGLATMAAFCYPIEAV). Over 167 to 201 (DVAKTGRAHAEQTWYSFQESPTPSAIVKTNLSPPK) the chain is Cytoplasmic.

This sequence belongs to the apolipoprotein O/MICOS complex subunit Mic27 family. Component of the mitochondrial contact site and cristae organizing system (MICOS) complex.

The protein resides in the mitochondrion outer membrane. Functionally, sustains mitochondrial morphology probably through maintaining cristae morphology. May act as a component of the MICOS complex, a large protein complex of the mitochondria. This Caenorhabditis elegans protein is MICOS complex subunit MIC27.